The sequence spans 151 residues: Protein Turandot Z (151 aa).

Positions 1–23 are cleaved as a signal peptide; sequence MSRLIHLSFVLALLACLTGTISA.

The protein belongs to the Turandot family.

Its subcellular location is the secreted. A humoral factor that may play a role in stress tolerance. This chain is Protein Turandot Z, found in Drosophila persimilis (Fruit fly).